The following is a 594-amino-acid chain: Adenine deaminase 1 (594 aa).

Belongs to the metallo-dependent hydrolases superfamily. Adenine deaminase family. Requires Mn(2+) as cofactor.

It carries out the reaction adenine + H2O + H(+) = hypoxanthine + NH4(+). In Jannaschia sp. (strain CCS1), this protein is Adenine deaminase 1.